The chain runs to 279 residues: Zinc-finger homeodomain protein 1 (279 aa).

Acidic residues predominate over residues 1–13 (MDFDDHDDGDEEM). Residues 1–47 (MDFDDHDDGDEEMPPMPVSSSYETPPQHGLAGGGMAPKPPGEIGSHV) are disordered. The ZF-HD dimerization-type; degenerate zinc finger occupies 57 to 106 (YRECLKNHAVGIGGHAVDGCGEFMAAGEEGTIDALRCAACNCHRNFHRKE). Residues 157–191 (AAAAAAGGHPQRPLALPSTSHSGRDDGDDLSGMVG) form a disordered region. A DNA-binding region (homeobox) is located at residues 215 to 278 (KKRFRTKFTQ…NNKHTLGKKL (64 aa)).

Homo- and heterodimer with other ZFHD proteins.

It localises to the nucleus. Its function is as follows. Putative transcription factor. This is Zinc-finger homeodomain protein 1 (ZHD1) from Oryza sativa subsp. indica (Rice).